A 668-amino-acid chain; its full sequence is Myb-like protein W (668 aa).

Disordered stretches follow at residues 57 to 124, 246 to 357, 403 to 432, 497 to 546, 561 to 583, and 631 to 668; these read LDQF…NESV, EKEK…EEEV, KPKSKLKSSSKPGIPTSPITMKTNPHTDKG, YTNT…NKER, SMGRFSAKPPPIKTTTTTTTTTS, and QCEERKKKEDRDVDEDGEDDYYFGGDNSKNGDDDDEII. Low complexity predominate over residues 69 to 121; the sequence is NNNNNNNSNNNNNNNNNNNNNNNNNNNNNNNNNNNNNNNNNNYNNYNNNNNNN. Residues 246 to 268 show a composition bias toward basic and acidic residues; the sequence is EKEKRKKEREEREEREKQEKQEQ. The span at 293–307 shows a compositional bias: low complexity; that stretch reads NNKDNNHNGYYYYYD. The segment covering 308 to 318 has biased composition (acidic residues); sequence NDNDNYNDGDD. A compositionally biased stretch (basic and acidic residues) spans 319-335; that stretch reads EKEKEKEKEKEKEKENE. Positions 344-398 constitute a Myb-like domain; sequence TSMVNSEEWTEEEVNKMNEIRGKLSTADYNYWDKVSAHVKSKTAEQCQRKYNSRF. Low complexity predominate over residues 501–542; it reads NNNNNNNNNNNNNNNNNNNNNNNNNNNNNNNNNNNNNNNNNN. The span at 632–641 shows a compositional bias: basic and acidic residues; sequence CEERKKKEDR. Residues 642 to 651 show a composition bias toward acidic residues; it reads DVDEDGEDDY.

This is Myb-like protein W (mybW) from Dictyostelium discoideum (Social amoeba).